The following is a 267-amino-acid chain: Hydroxyethylthiazole kinase (267 aa).

M46 is a substrate binding site. ATP-binding residues include R122 and T168. Position 195 (G195) interacts with substrate.

It belongs to the Thz kinase family. Mg(2+) serves as cofactor.

It catalyses the reaction 5-(2-hydroxyethyl)-4-methylthiazole + ATP = 4-methyl-5-(2-phosphooxyethyl)-thiazole + ADP + H(+). The protein operates within cofactor biosynthesis; thiamine diphosphate biosynthesis; 4-methyl-5-(2-phosphoethyl)-thiazole from 5-(2-hydroxyethyl)-4-methylthiazole: step 1/1. Its function is as follows. Catalyzes the phosphorylation of the hydroxyl group of 4-methyl-5-beta-hydroxyethylthiazole (THZ). This chain is Hydroxyethylthiazole kinase, found in Moorella thermoacetica (strain ATCC 39073 / JCM 9320).